We begin with the raw amino-acid sequence, 109 residues long: Thioredoxin 2 (109 aa).

The region spanning 2-109 (SGKYFEATDQ…IAKKLDEHIG (108 aa)) is the Thioredoxin domain. C33 and C36 are joined by a disulfide.

It belongs to the thioredoxin family.

Functionally, participates in various redox reactions through the reversible oxidation of its active center dithiol to a disulfide and catalyzes dithiol-disulfide exchange reactions. This chain is Thioredoxin 2 (trx2), found in Chlorobaculum tepidum (strain ATCC 49652 / DSM 12025 / NBRC 103806 / TLS) (Chlorobium tepidum).